We begin with the raw amino-acid sequence, 348 residues long: Calcium-gated potassium channel TvoK (348 aa).

3 helical membrane-spanning segments follow: residues 19 to 39 (LTKV…LEFL), 52 to 72 (YFTA…GDVV), and 80 to 100 (VVAM…TATI). One can recognise an RCK N-terminal domain in the interval 120–246 (KNHTIICNWN…VSAGATEVLS (127 aa)). In terms of domain architecture, RCK C-terminal spans 266–348 (DFILKSLSET…KKEVEEAIKG (83 aa)).

Heterooctamer composed of four full-length subunits and four soluble RCK domains.

Its subcellular location is the cell membrane. In terms of biological role, calcium-gated potassium channel. Can also be activated by Mg(2+), Mn(2+) and Ni(2+). The polypeptide is Calcium-gated potassium channel TvoK (Thermoplasma volcanium (strain ATCC 51530 / DSM 4299 / JCM 9571 / NBRC 15438 / GSS1)).